The following is a 512-amino-acid chain: Glutathione-binding protein GsiB (512 aa).

An N-terminal signal peptide occupies residues Met1–Ala26.

This sequence belongs to the bacterial solute-binding protein 5 family. In terms of assembly, the complex is composed of two ATP-binding proteins (GsiA), two transmembrane proteins (GsiC and GsiD) and a solute-binding protein (GsiB).

The protein localises to the periplasm. Its function is as follows. Part of the ABC transporter complex GsiABCD involved in glutathione import. Binds glutathione. This Salmonella paratyphi A (strain ATCC 9150 / SARB42) protein is Glutathione-binding protein GsiB.